The sequence spans 288 residues: Syntaxin-1A (288 aa).

The Cytoplasmic portion of the chain corresponds to 1–265; that stretch reads MKDRTQELRT…KYQSKARRKK (265 aa). Residues Ser14, Ser64, and Ser95 each carry the phosphoserine modification. Residues 68 to 109 are a coiled coil; that stretch reads DEKTKEELEELMSDIKKTANKVRSKLKSIEQSIEQEEGLNRS. The residue at position 188 (Ser188) is a Phosphoserine; by DAPK1. Residues 192–254 form the t-SNARE coiled-coil homology domain; that stretch reads LSEIETRHSE…ERAVSDTKKA (63 aa). Residues Lys252, Lys253, and Lys256 each participate in a glycyl lysine isopeptide (Lys-Gly) (interchain with G-Cter in SUMO) cross-link. Residues 266–286 traverse the membrane as a helical; Anchor for type IV membrane protein segment; sequence IMIIICCVILGIVIASTVGGI. The Extracellular portion of the chain corresponds to 287–288; it reads FA.

The protein belongs to the syntaxin family. In terms of assembly, part of the SNARE core complex containing SNAP25, VAMP2 and STX1A; this complex constitutes the basic catalytic machinery of the complex neurotransmitter release apparatus. The SNARE complex interacts with CPLX1. Interacts with STXBP1. The interaction with STXBP1 promotes assembly of the SNARE complex. Interacts (via C-terminus) with KCNB1 (via C-terminus); the interaction increases in a calcium-dependent manner and induces a pore-independent enhancement of exocytosis in neuroendocrine cells, chromaffin cells, pancreatic beta cells and from the soma of dorsal root ganglia (DRG) neurons. Interacts with SYTL4. Interacts with STXBP6. Interacts with PLCL1 (via C2 domain). Interacts with OTOF. Interacts with LGI3. Interacts (via the H3 domain) with SLC6A4 (via the N-terminus); this interaction regulates SLC4A6 channel conductance in thalamocortical neurons. Interacts with SYT6 and SYT8; the interaction is Ca(2+)-dependent. Interacts with VAMP8. Interacts with SNAP23. Interacts with VAPA and SYBU. Interacts with PRRT2. Interacts with SEPT8. Interacts with STXBP5L. Interacts with synaptotagmin-1/SYT1. Interacts with SEPTIN5; in the cerebellar cortex. Interacts with SEPTIN4; in the striatum. Phosphorylated by CK2. Phosphorylation at Ser-188 by DAPK1 significantly decreases its interaction with STXBP1. Post-translationally, sumoylated, sumoylation is required for regulation of synaptic vesicle endocytosis. As to expression, highly expressed in embryonic spinal cord and ganglia and in adult cerebellum and cerebral cortex. Expressed in heart, liver, fat, skeletal muscle, kidney and brain.

It localises to the cytoplasmic vesicle. It is found in the secretory vesicle. The protein resides in the synaptic vesicle membrane. The protein localises to the synapse. Its subcellular location is the synaptosome. It localises to the cell membrane. It is found in the secreted. Functionally, plays an essential role in hormone and neurotransmitter calcium-dependent exocytosis and endocytosis. Part of the SNARE (Soluble NSF Attachment Receptor) complex composed of SNAP25, STX1A and VAMP2 which mediates the fusion of synaptic vesicles with the presynaptic plasma membrane. STX1A and SNAP25 are localized on the plasma membrane while VAMP2 resides in synaptic vesicles. The pairing of the three SNAREs from the N-terminal SNARE motifs to the C-terminal anchors leads to the formation of the SNARE complex, which brings membranes into close proximity and results in final fusion. Participates in the calcium-dependent regulation of acrosomal exocytosis in sperm. Also plays an important role in the exocytosis of hormones such as insulin or glucagon-like peptide 1 (GLP-1). In Homo sapiens (Human), this protein is Syntaxin-1A (STX1A).